Reading from the N-terminus, the 57-residue chain is Lantibiotic nukacin (57 aa).

A propeptide spanning residues 1–30 is cleaved from the precursor; sequence MENSKVMKDIEVANLLEEVQEDELNEVLGA. Residues 39–44 constitute a cross-link (beta-methyllanthionine (Thr-Cys)); it reads TVSHDC. Cross-links (lanthionine (Ser-Cys)) lie at residues 41-55 and 48-56; these read SHDC…VFTC and SFQFVFTCC. At Thr54 the chain carries 2,3-didehydrobutyrine.

In terms of processing, maturation of lantibiotics involves the enzymatic conversion of Thr, and Ser into dehydrated AA and the formation of thioether bonds with cysteine. This is followed by membrane translocation and cleavage of the modified precursor.

The protein resides in the secreted. In terms of biological role, lanthionine-containing peptide antibiotic (lantibiotic) active on Gram-positive bacteria. The bactericidal activity of lantibiotics is based on depolarization of energized bacterial cytoplasmic membranes, initiated by the formation of aqueous transmembrane pores. This is Lantibiotic nukacin from Staphylococcus simulans.